The following is a 239-amino-acid chain: Pyridoxine 5'-phosphate synthase (239 aa).

Asn7 provides a ligand contact to 3-amino-2-oxopropyl phosphate. 9-10 (DH) contributes to the 1-deoxy-D-xylulose 5-phosphate binding site. Residue Arg18 coordinates 3-amino-2-oxopropyl phosphate. His43 (proton acceptor) is an active-site residue. 2 residues coordinate 1-deoxy-D-xylulose 5-phosphate: Arg45 and His50. The Proton acceptor role is filled by Glu70. Thr100 contacts 1-deoxy-D-xylulose 5-phosphate. His191 serves as the catalytic Proton donor. 3-amino-2-oxopropyl phosphate is bound by residues Gly192 and 213–214 (GH).

The protein belongs to the PNP synthase family. Homooctamer; tetramer of dimers.

The protein resides in the cytoplasm. It carries out the reaction 3-amino-2-oxopropyl phosphate + 1-deoxy-D-xylulose 5-phosphate = pyridoxine 5'-phosphate + phosphate + 2 H2O + H(+). It participates in cofactor biosynthesis; pyridoxine 5'-phosphate biosynthesis; pyridoxine 5'-phosphate from D-erythrose 4-phosphate: step 5/5. Catalyzes the complicated ring closure reaction between the two acyclic compounds 1-deoxy-D-xylulose-5-phosphate (DXP) and 3-amino-2-oxopropyl phosphate (1-amino-acetone-3-phosphate or AAP) to form pyridoxine 5'-phosphate (PNP) and inorganic phosphate. This chain is Pyridoxine 5'-phosphate synthase, found in Trichlorobacter lovleyi (strain ATCC BAA-1151 / DSM 17278 / SZ) (Geobacter lovleyi).